The chain runs to 618 residues: Grainyhead-like protein 1 homolog (618 aa).

A transcription activation region spans residues 1–91 (MTQEYDNKRP…EVEHPEPDHS (91 aa)). Residues 74–92 (RRSSTAKPEVEHPEPDHSK) are compositionally biased toward basic and acidic residues. The tract at residues 74–94 (RRSSTAKPEVEHPEPDHSKRN) is disordered. Thr-208 carries the post-translational modification Phosphothreonine. Residues 248-474 (SGNNFEYTLE…DLDTQPVLFI (227 aa)) enclose the Grh/CP2 DB domain. Interaction with DNA regions lie at residues 380-389 (TDFSSQKGVK) and 427-430 (RKIR).

Belongs to the grh/CP2 family. Grainyhead subfamily. Binds DNA as homodimer. Homodimer, also forms heterodimers with GRHL2 or GRHL3. In terms of processing, methylation at Arg-9 and Lys-116 may be involved in regulating transcriptional activation. In terms of tissue distribution, isoform 1 is highly expressed in brain, pancreas, tonsil, placenta and kidney. Isoform 2 is highly expressed in brain and liver. Expressed at very low levels in non-steroidogenic cells.

The protein localises to the nucleus. Its function is as follows. Transcription factor involved in epithelial development. Binds directly to the consensus DNA sequence 5'-AACCGGTT-3'. Important regulator of DSG1 in the context of hair anchorage and epidermal differentiation, participates in the maintenance of the skin barrier. There is no genetic interaction with GRHL3, nor functional cooperativity due to diverse target gene selectivity during epithelia development. May play a role in regulating glucose homeostasis and insulin signaling. Functions as a transcription activator. Functionally, may function as a repressor in tissues where both isoform 1 and isoform 2 are expressed. The polypeptide is Grainyhead-like protein 1 homolog (Homo sapiens (Human)).